The chain runs to 147 residues: Lysozyme C, intestinal isozyme (147 aa).

Positions 1–18 are cleaved as a signal peptide; the sequence is MKAVLILGLLLLSVTVQG. Residues 19-147 form the C-type lysozyme domain; the sequence is KKFEKCELAR…VSSYIRGCKL (129 aa). 4 disulfides stabilise this stretch: cysteine 24–cysteine 145, cysteine 48–cysteine 133, cysteine 83–cysteine 99, and cysteine 95–cysteine 113. Residues glutamate 53 and aspartate 71 contribute to the active site.

It belongs to the glycosyl hydrolase 22 family.

The catalysed reaction is Hydrolysis of (1-&gt;4)-beta-linkages between N-acetylmuramic acid and N-acetyl-D-glucosamine residues in a peptidoglycan and between N-acetyl-D-glucosamine residues in chitodextrins.. In terms of biological role, lysozymes have primarily a bacteriolytic function; those in tissues and body fluids are associated with the monocyte-macrophage system and enhance the activity of immunoagents. The polypeptide is Lysozyme C, intestinal isozyme (Bos taurus (Bovine)).